Consider the following 861-residue polypeptide: Leucine--tRNA ligase (861 aa).

The 'HIGH' region motif lies at 42-52 (PYPSGNLHMGH). The 'KMSKS' region signature appears at 620–624 (KMSKS). Residue lysine 623 participates in ATP binding.

It belongs to the class-I aminoacyl-tRNA synthetase family.

It localises to the cytoplasm. It carries out the reaction tRNA(Leu) + L-leucine + ATP = L-leucyl-tRNA(Leu) + AMP + diphosphate. The polypeptide is Leucine--tRNA ligase (Baumannia cicadellinicola subsp. Homalodisca coagulata).